The chain runs to 543 residues: Chaperonin GroEL (543 aa).

ATP is bound by residues 29–32 (TVGP), 86–90 (DGTTT), Gly413, and Asp504.

Belongs to the chaperonin (HSP60) family. As to quaternary structure, forms a cylinder of 14 subunits composed of two heptameric rings stacked back-to-back. Interacts with the co-chaperonin GroES.

Its subcellular location is the cytoplasm. The enzyme catalyses ATP + H2O + a folded polypeptide = ADP + phosphate + an unfolded polypeptide.. Together with its co-chaperonin GroES, plays an essential role in assisting protein folding. The GroEL-GroES system forms a nano-cage that allows encapsulation of the non-native substrate proteins and provides a physical environment optimized to promote and accelerate protein folding. The polypeptide is Chaperonin GroEL (Mycoplasma genitalium (strain ATCC 33530 / DSM 19775 / NCTC 10195 / G37) (Mycoplasmoides genitalium)).